A 325-amino-acid polypeptide reads, in one-letter code: Probable cell division protein WhiA (325 aa).

Positions 273–306 (SLEELGALADPPLTKDAVAGRIRRLLALADKRAN) form a DNA-binding region, H-T-H motif.

The protein belongs to the WhiA family.

Its function is as follows. Involved in cell division and chromosome segregation. This chain is Probable cell division protein WhiA, found in Frankia alni (strain DSM 45986 / CECT 9034 / ACN14a).